The chain runs to 181 residues: UPF0302 protein LMOf2365_1950 (181 aa).

Belongs to the UPF0302 family.

This is UPF0302 protein LMOf2365_1950 from Listeria monocytogenes serotype 4b (strain F2365).